The chain runs to 163 residues: CASP-like protein 1C2 (163 aa).

Residues 1 to 6 (MAKSNK) lie on the Cytoplasmic side of the membrane. A helical transmembrane segment spans residues 7-27 (IFTNTLRLLALAATVVAIVFM). Topologically, residues 28–52 (VTSHDSAQVLNLTFTAKYSNTPAFK) are extracellular. An N-linked (GlcNAc...) asparagine glycan is attached at Asn38. Residues 53–73 (FLVIGEAIAGGYTVISILLSF) traverse the membrane as a helical segment. At 74–79 (KGLFWR) the chain is on the cytoplasmic side. The helical transmembrane segment at 80-100 (LIVILDMVTTVLLTSSISAAL) threads the bilayer. Over 101–128 (AIAQVGKKGNTHAGWLPICGQVPDFCDY) the chain is Extracellular. A helical transmembrane segment spans residues 129–149 (VTIALIAGFAAAIIYFVLLLC). Topologically, residues 150–163 (SLYVVLSPIFVATP) are cytoplasmic.

The protein belongs to the Casparian strip membrane proteins (CASP) family. Homodimer and heterodimers.

The protein localises to the cell membrane. This chain is CASP-like protein 1C2, found in Populus trichocarpa (Western balsam poplar).